Consider the following 237-residue polypeptide: F-box only protein 50 (237 aa).

The region spanning 31–231 (VFETKPFERN…VTDSSVIVKA (201 aa)) is the FBA domain. Residues 40 to 82 (NLLQNPSPYGVNHTVPPPEPHRSGIPPPSDRPPQLEPEGNFSG) form a disordered region. A compositionally biased stretch (pro residues) spans 64–74 (IPPPSDRPPQL).

In terms of tissue distribution, expressed in nonspecific cytotoxic cells (NCC).

It is found in the cytoplasm. Its function is as follows. May promote cell proliferation. The polypeptide is F-box only protein 50 (nccrp1) (Danio rerio (Zebrafish)).